Reading from the N-terminus, the 397-residue chain is 1-deoxy-D-xylulose 5-phosphate reductoisomerase (397 aa).

NADPH-binding residues include Thr-10, Gly-11, Ser-12, Ile-13, Gln-38, and Asn-123. Lys-124 serves as a coordination point for 1-deoxy-D-xylulose 5-phosphate. Glu-125 contacts NADPH. Asp-149 contributes to the Mn(2+) binding site. 1-deoxy-D-xylulose 5-phosphate-binding residues include Ser-150, Glu-151, Ser-185, and His-208. Glu-151 serves as a coordination point for Mn(2+). Gly-214 is a binding site for NADPH. 1-deoxy-D-xylulose 5-phosphate-binding residues include Ser-221, Asn-226, Lys-227, and Glu-230. Glu-230 provides a ligand contact to Mn(2+).

This sequence belongs to the DXR family. It depends on Mg(2+) as a cofactor. Requires Mn(2+) as cofactor.

It carries out the reaction 2-C-methyl-D-erythritol 4-phosphate + NADP(+) = 1-deoxy-D-xylulose 5-phosphate + NADPH + H(+). It functions in the pathway isoprenoid biosynthesis; isopentenyl diphosphate biosynthesis via DXP pathway; isopentenyl diphosphate from 1-deoxy-D-xylulose 5-phosphate: step 1/6. In terms of biological role, catalyzes the NADPH-dependent rearrangement and reduction of 1-deoxy-D-xylulose-5-phosphate (DXP) to 2-C-methyl-D-erythritol 4-phosphate (MEP). The protein is 1-deoxy-D-xylulose 5-phosphate reductoisomerase of Idiomarina loihiensis (strain ATCC BAA-735 / DSM 15497 / L2-TR).